A 472-amino-acid polypeptide reads, in one-letter code: Inhibitor of Apoptosis OPG037 (472 aa).

ANK repeat units follow at residues 97–126 (DGNYPLHIASKINNNRIVAMLLTHGADPNA), 130–161 (HNKTPLYYLSGTDDEVIERINLLVQYGAKINN), 233–263 (DGNTPLHIVCSKTVKNVDIIDLLLPSTDVNK), 267–297 (FGDSPLTLLIKTLSPAHLINKLLSTSNVITD), 322–351 (YDSTDFKMAVEVGSIRCVKYLLDNDIICED), and 353–377 (MYYAVLSEYETMVDYLLFNHFSVDF).

It belongs to the orthopoxvirus OPG037 protein family. As to quaternary structure, may interact with host caspase-9-Apaf-1 complex.

It localises to the host cytoplasm. Functionally, inhibits host apoptosis. Acts by associating with host apoptosome. This Vaccinia virus (strain Western Reserve) (VACV) protein is Inhibitor of Apoptosis OPG037 (OPG037).